The sequence spans 110 residues: ATP synthase subunit c (110 aa).

Helical transmembrane passes span 4–24 (FFVI…VFAA), 37–57 (ATAG…AGMG), and 81–101 (FIVG…FVLI).

The protein belongs to the ATPase C chain family. In terms of assembly, F-type ATPases have 2 components, F(1) - the catalytic core - and F(0) - the membrane proton channel. F(1) has five subunits: alpha(3), beta(3), gamma(1), delta(1), epsilon(1). F(0) has three main subunits: a(1), b(2) and c(10-14). The alpha and beta chains form an alternating ring which encloses part of the gamma chain. F(1) is attached to F(0) by a central stalk formed by the gamma and epsilon chains, while a peripheral stalk is formed by the delta and b chains.

The protein resides in the cell inner membrane. Its function is as follows. F(1)F(0) ATP synthase produces ATP from ADP in the presence of a proton or sodium gradient. F-type ATPases consist of two structural domains, F(1) containing the extramembraneous catalytic core and F(0) containing the membrane proton channel, linked together by a central stalk and a peripheral stalk. During catalysis, ATP synthesis in the catalytic domain of F(1) is coupled via a rotary mechanism of the central stalk subunits to proton translocation. In terms of biological role, key component of the F(0) channel; it plays a direct role in translocation across the membrane. A homomeric c-ring of between 10-14 subunits forms the central stalk rotor element with the F(1) delta and epsilon subunits. The sequence is that of ATP synthase subunit c from Thermodesulfovibrio yellowstonii (strain ATCC 51303 / DSM 11347 / YP87).